The sequence spans 89 residues: Small ribosomal subunit protein bS20 (89 aa).

Disordered stretches follow at residues 1–25 (MANI…ASMK) and 69–89 (KNAA…IQAS). Over residues 7–20 (AIKRAKTSEKRRAH) the composition is skewed to basic residues.

This sequence belongs to the bacterial ribosomal protein bS20 family.

In terms of biological role, binds directly to 16S ribosomal RNA. The protein is Small ribosomal subunit protein bS20 of Geobacillus kaustophilus (strain HTA426).